Here is a 683-residue protein sequence, read N- to C-terminus: Leucine zipper putative tumor suppressor 2 homolog (683 aa).

3 disordered regions span residues 1 to 37 (MAAL…TMGS), 82 to 107 (YSSQ…NNGN), and 262 to 320 (MGHI…CDRS). Composition is skewed to polar residues over residues 11 to 37 (IDQN…TMGS) and 96 to 107 (KPSTTTSGNNGN). The span at 290–308 (SDSGRSSSSKSTGSLSGRG) shows a compositional bias: low complexity. A coiled-coil region spans residues 324 to 665 (SDEILIRELE…LELEARELDE (342 aa)).

This sequence belongs to the LZTS2 family.

The protein localises to the cytoplasm. The protein resides in the cytoskeleton. Its subcellular location is the microtubule organizing center. It localises to the centrosome. Functionally, negative regulator of katanin-mediated microtubule severing and release from the centrosome. Required for central spindle formation and the completion of cytokinesis. Negative regulator of the Wnt signaling pathway. Represses beta-catenin-mediated transcriptional activation by promoting the nuclear exclusion of beta-catenin. This chain is Leucine zipper putative tumor suppressor 2 homolog (lzts2), found in Xenopus tropicalis (Western clawed frog).